Reading from the N-terminus, the 119-residue chain is Beta-2-microglobulin (119 aa).

Residues 1 to 20 form the signal peptide; sequence MARSVVVSLFVLLALAGLEA. The 90-residue stretch at 25-114 folds into the Ig-like C1-type domain; sequence PKIQVYSRHP…VTFQTPKTVK (90 aa).

It belongs to the beta-2-microglobulin family. As to quaternary structure, heterodimer of an alpha chain and a beta chain. Beta-2-microglobulin is the beta-chain of major histocompatibility complex class I molecules.

The protein resides in the secreted. In terms of biological role, component of the class I major histocompatibility complex (MHC). Involved in the presentation of peptide antigens to the immune system. This is Beta-2-microglobulin (B2M) from Brachyteles arachnoides (Southern muriqui).